The primary structure comprises 331 residues: Zinc finger CW-type PWWP domain protein 2 homolog (331 aa).

A CW-type zinc finger spans residues 9 to 64 (EFVHRTWVQCENESCLKWRLLSPAAAAAVNPSEPWYCFMNTDPSYSSCSVSEEDFP). Cys-18, Cys-23, Cys-45, and Cys-56 together coordinate Zn(2+). One can recognise a PWWP domain in the interval 83–147 (LGSLVLVKLR…AAFVGHFSLT (65 aa)). The segment at 264-295 (IQEPTAREDESQGEQLSQCSPESPTGSPFQSY) is disordered. The span at 276–293 (GEQLSQCSPESPTGSPFQ) shows a compositional bias: polar residues.

Its function is as follows. Histone methylation reader which binds to non-methylated (H3K4me0), monomethylated (H3K4me1), dimethylated (H3K4me2) and trimethylated (H3K4me3) 'Lys-4' on histone H3. The order of binding preference is H3K4me3 &gt; H3K4me2 &gt; H3K4me1 &gt; H3K4me0. The sequence is that of Zinc finger CW-type PWWP domain protein 2 homolog (Zcwpw2) from Mus musculus (Mouse).